A 952-amino-acid polypeptide reads, in one-letter code: Germ layers disorganized gldi-3 (952 aa).

Residues 39 to 100 (KSFGRATTND…NGTYINDRRL (62 aa)) enclose the FHA domain. Disordered regions lie at residues 174–220 (IGPR…MPST), 483–639 (GTPK…ESTV), and 652–866 (AAQS…KERC). 2 stretches are compositionally biased toward polar residues: residues 179 to 195 (PSTT…STNG) and 202 to 220 (NRAS…MPST). Residues 523–537 (EESEILDVVGTDEPD) are compositionally biased toward acidic residues. Over residues 553 to 568 (PEDHGRQTQNKIDKNV) the composition is skewed to basic and acidic residues. 2 stretches are compositionally biased toward polar residues: residues 569-584 (RMSS…TPSA) and 600-620 (VTSS…NPVS). The segment covering 662–679 (SVSNTTSSTSASLTTSSV) has biased composition (low complexity). Over residues 685–706 (TSSKENTDQKRAVDDSSDESAR) the composition is skewed to basic and acidic residues. Over residues 715–724 (SATPSSTPAE) the composition is skewed to low complexity. Over residues 725 to 742 (SSKRKQKDTSSRKMKQLD) the composition is skewed to basic and acidic residues. A compositionally biased stretch (basic residues) spans 761–772 (TKRRDKARRSTR). Positions 789–800 (VEDEDETDDVQE) are enriched in acidic residues. Basic and acidic residues-rich tracts occupy residues 823–832 (IKERKTKDKD) and 856–866 (PPKTEPSKERC).

The protein localises to the nucleus. Its function is as follows. Potential transcription factor that may play a role in the regulation of genes involved in cell cycle G1/S transition. May bind to regulatory elements of genes. The chain is Germ layers disorganized gldi-3 from Caenorhabditis elegans.